The primary structure comprises 144 residues: Large ribosomal subunit protein uL15 (144 aa).

The interval 1–56 is disordered; it reads MELNNLKPAAGAKHAKRRVGRGIGSGLGKTAGRGHKGQKSRSGGFHKVGFEGGQMP. Positions 21-31 are enriched in gly residues; sequence RGIGSGLGKTA.

The protein belongs to the universal ribosomal protein uL15 family. As to quaternary structure, part of the 50S ribosomal subunit.

Binds to the 23S rRNA. The sequence is that of Large ribosomal subunit protein uL15 from Burkholderia multivorans (strain ATCC 17616 / 249).